The sequence spans 382 residues: Opsin Rh5 (382 aa).

Topologically, residues 1–49 (MHINGPSGPQAYVNDSLGDGSVFPMGHGYPAEYQHMVHAHWRGFREAPI) are extracellular. Asn14 carries N-linked (GlcNAc...) asparagine glycosylation. Residues 50–76 (YYHAGFYIAFIVLMLSSIFGNGLVIWI) traverse the membrane as a helical segment. Residues 77 to 88 (FSTSKSLRTPSN) lie on the Cytoplasmic side of the membrane. The helical transmembrane segment at 89-112 (LLILNLAIFDLFMCTNMPHYLINA) threads the bilayer. The Extracellular portion of the chain corresponds to 113-127 (TVGYIVGGDLGCDIY). An intrachain disulfide couples Cys124 to Cys201. Residues 128–147 (ALNGGISGMGASITNAFIAF) traverse the membrane as a helical segment. At 148–165 (DRYKTISNPIDGRLSYGQ) the chain is on the cytoplasmic side. A helical membrane pass occupies residues 166–190 (IVLLILFTWLWATPFSVLPLFQIWG). The Extracellular segment spans residues 191 to 214 (RYQPEGFLTTCSFDYLTNTDENRL). A helical membrane pass occupies residues 215–242 (FVRTIFVWSYVIPMTMILVSYYKLFTHV). Residues 243–278 (RVHEKMLAEQAKKMNVKSLSANANADNMSVELRIAK) are Cytoplasmic-facing. Residues 279-302 (AALIIYMLFILAWTPYSVVALIGC) form a helical membrane-spanning segment. At 303–310 (FGEQQLIT) the chain is on the extracellular side. The helical transmembrane segment at 311–335 (PFVSMLPCLACKSVSCLDPWVYATS) threads the bilayer. The residue at position 322 (Lys322) is an N6-(retinylidene)lysine. Over 336-382 (HPKYRLELERRLPWLGIREKHATSGTSGGQESVASVSGDTLALSVQN) the chain is Cytoplasmic. The segment at 357–382 (ATSGTSGGQESVASVSGDTLALSVQN) is disordered. Positions 358-382 (TSGTSGGQESVASVSGDTLALSVQN) are enriched in polar residues.

It belongs to the G-protein coupled receptor 1 family. Opsin subfamily. Post-translationally, phosphorylated on some or all of the serine and threonine residues present in the C-terminal region. Expressed specifically in the retina. Each Drosophila eye is composed of 800 facets or ommatidia. Each ommatidium contains 8 photoreceptor cells (R1-R8), the R1 to R6 cells are outer cells, while R7 and R8 are inner cells. Rh5 is expressed only in R8 photoreceptor cells in a subset of ommatidia.

The protein resides in the cell projection. Its subcellular location is the rhabdomere membrane. Its function is as follows. Visual pigments are the light-absorbing molecules that mediate vision. They consist of an apoprotein, opsin, covalently linked to cis-retinal. The sequence is that of Opsin Rh5 (Rh5) from Drosophila melanogaster (Fruit fly).